Consider the following 314-residue polypeptide: Cytochrome f (314 aa).

An N-terminal signal peptide occupies residues 1–29; that stretch reads MTRSISISVLIISVLIMIYVITRTSISNA. Heme contacts are provided by Tyr-30, Cys-50, Cys-53, and His-54. Residues 280-300 form a helical membrane-spanning segment; it reads VQGLLFFLASVILAQIFLVLK.

This sequence belongs to the cytochrome f family. In terms of assembly, the 4 large subunits of the cytochrome b6-f complex are cytochrome b6, subunit IV (17 kDa polypeptide, petD), cytochrome f and the Rieske protein, while the 4 small subunits are PetG, PetL, PetM and PetN. The complex functions as a dimer. Heme serves as cofactor.

It is found in the plastid. The protein resides in the chloroplast thylakoid membrane. Component of the cytochrome b6-f complex, which mediates electron transfer between photosystem II (PSII) and photosystem I (PSI), cyclic electron flow around PSI, and state transitions. The polypeptide is Cytochrome f (Illicium oligandrum (Star anise)).